A 366-amino-acid polypeptide reads, in one-letter code: VAVDACLEQDSDSKVACETCTKTNLVMVFGEITTKANVDYEKIVRNTCRNIGFVSADVGLDADNCKVLVNIEQQSPDIAQGVHGHFTKKPEEIGAGDQGHMFGYATDETPELMPLSHVLATKLGARLTEVRKNGTCAWLRPDGNTQVTVEYYNDKGAMVPIRVHTVLISTQHDETVTNDEIAADLKEHVIKPVIPEKYLDSKTICHLNPSGRFVIGGPHGDAGLTGRKIIIDTYGGWGAHGGGAFSGKDPTKVDRRGAYIVRQAAKSIVASGLARRAIVQLLRAIGVPEPLSVFVDTYGTGKIPDREILKIVKETFDFRPGMISINLDLLRGGNGRFLKTAAYGHFGREDPDFTWEVVKPLKWEKA.

K(+) is bound at residue Glu18. Glu31 and Gln74 together coordinate L-methionine. ATP contacts are provided by residues 142–144, 210–213, Asp221, 227–228, Ala244, Lys248, and Lys252; these read DGN, SGRF, and RK. Residue Asp221 participates in L-methionine binding. Lys252 provides a ligand contact to L-methionine.

It belongs to the AdoMet synthase family. In terms of assembly, homotetramer. Mn(2+) is required as a cofactor. It depends on Mg(2+) as a cofactor. Co(2+) serves as cofactor. The cofactor is K(+).

The protein localises to the cytoplasm. The enzyme catalyses L-methionine + ATP + H2O = S-adenosyl-L-methionine + phosphate + diphosphate. Its pathway is amino-acid biosynthesis; S-adenosyl-L-methionine biosynthesis; S-adenosyl-L-methionine from L-methionine: step 1/1. Catalyzes the formation of S-adenosylmethionine from methionine and ATP. The reaction comprises two steps that are both catalyzed by the same enzyme: formation of S-adenosylmethionine (AdoMet) and triphosphate, and subsequent hydrolysis of the triphosphate. The polypeptide is S-adenosylmethionine synthase 1 (SAMS1) (Pisum sativum (Garden pea)).